We begin with the raw amino-acid sequence, 211 residues long: Large ribosomal subunit protein uL3 (211 aa).

Glutamine 150 carries the N5-methylglutamine modification.

The protein belongs to the universal ribosomal protein uL3 family. Part of the 50S ribosomal subunit. Forms a cluster with proteins L14 and L19. Post-translationally, methylated by PrmB.

Its function is as follows. One of the primary rRNA binding proteins, it binds directly near the 3'-end of the 23S rRNA, where it nucleates assembly of the 50S subunit. The sequence is that of Large ribosomal subunit protein uL3 from Pseudomonas fluorescens (strain SBW25).